We begin with the raw amino-acid sequence, 84 residues long: Acyl carrier protein (84 aa).

A Carrier domain is found at 4–79 (NEIFEKVQDI…EVVDFIKSKL (76 aa)). O-(pantetheine 4'-phosphoryl)serine is present on Ser39.

It belongs to the acyl carrier protein (ACP) family. Post-translationally, 4'-phosphopantetheine is transferred from CoA to a specific serine of apo-ACP by AcpS. This modification is essential for activity because fatty acids are bound in thioester linkage to the sulfhydryl of the prosthetic group.

It is found in the plastid. Its subcellular location is the chloroplast. It functions in the pathway lipid metabolism; fatty acid biosynthesis. Its function is as follows. Carrier of the growing fatty acid chain in fatty acid biosynthesis. The protein is Acyl carrier protein of Porphyra purpurea (Red seaweed).